The chain runs to 1343 residues: DNA-directed RNA polymerase subunit beta (1343 aa).

Belongs to the RNA polymerase beta chain family. As to quaternary structure, the RNAP catalytic core consists of 2 alpha, 1 beta, 1 beta' and 1 omega subunit. When a sigma factor is associated with the core the holoenzyme is formed, which can initiate transcription.

It carries out the reaction RNA(n) + a ribonucleoside 5'-triphosphate = RNA(n+1) + diphosphate. In terms of biological role, DNA-dependent RNA polymerase catalyzes the transcription of DNA into RNA using the four ribonucleoside triphosphates as substrates. The polypeptide is DNA-directed RNA polymerase subunit beta (Haemophilus influenzae (strain ATCC 51907 / DSM 11121 / KW20 / Rd)).